The chain runs to 64 residues: Small ribosomal subunit protein eS17 (64 aa).

The protein belongs to the eukaryotic ribosomal protein eS17 family.

The chain is Small ribosomal subunit protein eS17 from Methanocorpusculum labreanum (strain ATCC 43576 / DSM 4855 / Z).